The chain runs to 514 residues: Prespore vesicle protein (514 aa).

The signal sequence occupies residues 1–18 (MRLYLLSLILVFYASVSS). 2 consecutive Follistatin-like domains span residues 40–62 (LCGTHYCPPGSTCESKHGHYICR) and 240–262 (TCETKKCEASQVCIMVNGDAQCI). Over residues 285–297 (QRNAKPAQQQRSA) the composition is skewed to polar residues. The disordered stretch occupies residues 285 to 514 (QRNAKPAQQQ…QARPATQKRN (230 aa)). 3 stretches are compositionally biased toward low complexity: residues 328–391 (QHNA…HTAA), 398–413 (AAQQHAKPAAHGAKPA), and 424–457 (AAQQHAKPAAHTAAKPVQHNAAQQHAKPAAKPAK). Polar residues predominate over residues 480–508 (RIRQQNLVKQAAQKKQTSQRAASKNQARP).

This chain is Prespore vesicle protein (psvA), found in Dictyostelium discoideum (Social amoeba).